A 258-amino-acid polypeptide reads, in one-letter code: Indole-3-glycerol phosphate synthase (258 aa).

It belongs to the TrpC family.

The enzyme catalyses 1-(2-carboxyphenylamino)-1-deoxy-D-ribulose 5-phosphate + H(+) = (1S,2R)-1-C-(indol-3-yl)glycerol 3-phosphate + CO2 + H2O. It functions in the pathway amino-acid biosynthesis; L-tryptophan biosynthesis; L-tryptophan from chorismate: step 4/5. The sequence is that of Indole-3-glycerol phosphate synthase from Chlorobium limicola (strain DSM 245 / NBRC 103803 / 6330).